We begin with the raw amino-acid sequence, 277 residues long: Ribosomally synthesized cyclic peptide asperipin-2a precursor aprA (277 aa).

The signal sequence occupies residues 1–19 (MHLSRYIAVLLSASSFVSA). Propeptides lie at residues 20-69 (LPLQ…LDKR), 76-88 (KRNAETPEDLDKR), 95-107 (KRNAETPEDLDKR), 114-126 (KRNAETPEDLDKR), 133-145 (KRNAETPEDLDKR), 152-164 (KRNAETPEDLDKR), 171-183 (KRNAETPDDLDKR), 190-202 (KRNAETPDDLDKR), 209-221 (KRNAETPEDLDKR), 228-240 (KRNAETPEDLDKR), 247-259 (KRNAETPEDLDKR), and 266-277 (KRNAETPEDLDK).

In terms of processing, aprA is processed by kexin proteases to produce 11 identical copies of the hexapeptide Phe-Tyr-Tyr-Thr-Gly-Tyr, that is further modified aprY and aprR to yield asperipin-2a. The bicyclic structure of asperipin-2a is likely synthesized by the single ustYa family oxidase aprY. The reductase aprR may be required for the final reduction to yield asperipin-2a.

It participates in secondary metabolite biosynthesis. In terms of biological role, ribosomally synthesized cyclic peptide asperipin-2a precursor; part of the gene cluster that mediates the biosynthesis of the asperipin-2a, a bicyclic peptide that possesses two macrocyclic ether rings consisting of 14- and 17-membered paracyclophans. The aprA translated product contains a 11-fold repeated peptide embedding the hexapeptide Phe-Tyr-Tyr-Thr-Gly-Tyr, that is converted into asperipin-2a. After being excised from the precursor peptide by kexin proteases, the core peptides are cyclized and modified post-translationally by enzymes encoded within the corresponding gene cluster. This chain is Ribosomally synthesized cyclic peptide asperipin-2a precursor aprA, found in Aspergillus flavus (strain ATCC 200026 / FGSC A1120 / IAM 13836 / NRRL 3357 / JCM 12722 / SRRC 167).